Here is a 550-residue protein sequence, read N- to C-terminus: ATP-dependent RNA helicase MSS116, mitochondrial (550 aa).

Residues 1–11 (MPPPPKRKWPN) show a composition bias toward basic residues. A mitochondrion-targeting transit peptide spans 1 to 41 (MPPPPKRKWPNRPRGGGGANGSASGTPTTPRSTVAQQPKRP). The disordered stretch occupies residues 1–51 (MPPPPKRKWPNRPRGGGGANGSASGTPTTPRSTVAQQPKRPKVEDAAPAAE). A Q motif motif is present at residues 71 to 99 (FSELSSVLDKSLLDGLDKMGFEFMSPVQQ). The region spanning 103–285 (TELPSLSSDC…KIVLFPGFTH (183 aa)) is the Helicase ATP-binding domain. 116 to 123 (AKTGTGKT) serves as a coordination point for ATP. The short motif at 230–233 (DEAD) is the DEAD box element. The Helicase C-terminal domain occupies 316–472 (ALSALIQEEH…KVPEQEAAIT (157 aa)).

Belongs to the DEAD box helicase family. DDX18/HAS1 subfamily.

It localises to the mitochondrion matrix. It catalyses the reaction ATP + H2O = ADP + phosphate + H(+). Functionally, ATP-dependent RNA helicase required for mitochondrial splicing of group I and II introns. Also required for efficient mitochondrial translation. The sequence is that of ATP-dependent RNA helicase MSS116, mitochondrial (MSS116) from Phaeosphaeria nodorum (strain SN15 / ATCC MYA-4574 / FGSC 10173) (Glume blotch fungus).